A 459-amino-acid chain; its full sequence is Cyclic GMP-AMP synthase-like receptor 2 (459 aa).

ATP is bound by residues S68 and 79 to 81 (EFD). Mg(2+) is bound by residues E79, D81, and D199. Residues D199 and 248–255 (RSSFYAVE) each bind GTP. Residue 252–255 (YAVE) participates in ATP binding. A Zn(2+)-binding site is contributed by H263. ATP is bound by residues K274 and 288–292 (SYYIK).

The protein belongs to the mab-21 family. Mg(2+) serves as cofactor. Requires Mn(2+) as cofactor.

The enzyme catalyses GTP + ATP = 3',2'-cGAMP + 2 diphosphate. It catalyses the reaction GTP + ATP = 2',3'-cGAMP + 2 diphosphate. The catalysed reaction is GTP + ATP = pppGp(2'-5')A + diphosphate. It carries out the reaction pppA(2'-5')pG = 3',2'-cGAMP + diphosphate. The enzyme catalyses pppGp(2'-5')A = 2',3'-cGAMP + diphosphate. The enzyme activity is specifically activated by some nucleic acid. Functionally, nucleotidyltransferase that catalyzes the formation of cyclic GMP-AMP from ATP and GTP and plays a key role in antiviral innate immunity. Directly binds some unknown nucleic acid, activating the nucleotidyltransferase activity, leading to synthesis of both 3',2'-cGAMP and 2',3'-cGAMP second messengers. 3',2'-cGAMP and 2',3'-cGAMP bind to and activate Sting, thereby triggering the antiviral immune response via activation of the NF-kappa-B transcription factor Rel (Relish). The sequence is that of Cyclic GMP-AMP synthase-like receptor 2 from Drosophila melanogaster (Fruit fly).